The following is a 692-amino-acid chain: Acyl-coenzyme A oxidase 2, peroxisomal (692 aa).

The N-terminal 49 residues, methionine 1 to cysteine 49, are a transit peptide targeting the peroxisome. Positions 186, 192, 225, 365, 384, 452, and 473 each coordinate FAD. The active-site Proton acceptor is the glutamate 475. Aspartate 477 is a binding site for FAD.

This sequence belongs to the acyl-CoA oxidase family. Homodimer. FAD is required as a cofactor. In terms of tissue distribution, expressed mainly in flowers and young seedlings. Lower expression in roots, leaves and bracts.

The protein localises to the peroxisome. It catalyses the reaction a 2,3-saturated acyl-CoA + O2 = a (2E)-enoyl-CoA + H2O2. In terms of biological role, catalyzes the desaturation of long-chain acyl-CoAs to 2-trans-enoyl-CoAs. Active on substrates longer than C14 and mostly with C18-CoA. Activity on long-chain mono-unsaturated substrates is double than with the corresponding saturated substrates. This is Acyl-coenzyme A oxidase 2, peroxisomal from Arabidopsis thaliana (Mouse-ear cress).